Reading from the N-terminus, the 379-residue chain is MSIFFKPPIDIEILFDNEESRKHVDIATRSSNSSYKSMKESLPVYEDGESLGGIVTLRVRDSKKVDHLGIKVSVIGSIDMLKSHGSGNSSSKKVTSSTSSSSSNGSVDVRKNSVDQFLCQSYDLCPAGELQHSQSFPFLFRDLSKRYESYKGKNVDVAYYVKVTVMRKSTDISKIKRFWVYLYNSVTTAPNTLSANETKATTNDIAGGNYAADNASDNTQTKSTQGEAADVNQVLPISHSNNEPKPVRLDIGIENCLHIEFEYAKSQYSLKEVIVGRIYFLLTRLRIKHMELSLITRESSGLQTSNVMTDSTAIRYEIMDGSSVKGETIPIRLFLSGYDLTPNMSCNYFNVKNYLSLVIIDEDGRRYFKQSEITLYRTR.

Residues His84 to Val107 are compositionally biased toward low complexity. The disordered stretch occupies residues His84–Asp108. At Ser216 the chain carries Phosphoserine.

This sequence belongs to the VPS26 family. Component of the retromer complex which consists of VPS29, VPS26, VPS35, VPS5 and VPS17. Component of a retromer subcomplex consisting of VPS29, VPS26 and VPS35.

Its function is as follows. Plays a role in vesicular protein sorting. Required for the endosome-to-Golgi retrieval of the vacuolar protein sorting receptor VPS10. Component of the membrane-associated retromer complex which is essential in endosome-to-Golgi retrograde transport. The VPS29-VPS26-VPS35 subcomplex may be involved in cargo selection. In Saccharomyces cerevisiae (strain ATCC 204508 / S288c) (Baker's yeast), this protein is Carboxypeptidase Y-deficient protein 8 (PEP8).